Reading from the N-terminus, the 258-residue chain is Regulatory protein RecX (258 aa).

Belongs to the RecX family.

Its subcellular location is the cytoplasm. Modulates RecA activity. This Streptococcus equi subsp. equi (strain 4047) protein is Regulatory protein RecX.